We begin with the raw amino-acid sequence, 208 residues long: Small ribosomal subunit protein uS4 (208 aa).

The S4 RNA-binding domain maps to 98–161; the sequence is RRLDNVIYRM…KELEIIKESL (64 aa).

This sequence belongs to the universal ribosomal protein uS4 family. In terms of assembly, part of the 30S ribosomal subunit. Contacts protein S5. The interaction surface between S4 and S5 is involved in control of translational fidelity.

Its function is as follows. One of the primary rRNA binding proteins, it binds directly to 16S rRNA where it nucleates assembly of the body of the 30S subunit. In terms of biological role, with S5 and S12 plays an important role in translational accuracy. This chain is Small ribosomal subunit protein uS4, found in Thermodesulfovibrio yellowstonii (strain ATCC 51303 / DSM 11347 / YP87).